We begin with the raw amino-acid sequence, 368 residues long: Quinolinate synthase (368 aa).

2 residues coordinate iminosuccinate: H46 and S63. C110 provides a ligand contact to [4Fe-4S] cluster. Iminosuccinate contacts are provided by residues 141 to 143 (YVN) and S162. C230 provides a ligand contact to [4Fe-4S] cluster. Iminosuccinate is bound by residues 256 to 258 (HPE) and T273. C320 is a [4Fe-4S] cluster binding site.

The protein belongs to the quinolinate synthase family. Type 3 subfamily. [4Fe-4S] cluster is required as a cofactor.

It localises to the cytoplasm. It catalyses the reaction iminosuccinate + dihydroxyacetone phosphate = quinolinate + phosphate + 2 H2O + H(+). It participates in cofactor biosynthesis; NAD(+) biosynthesis; quinolinate from iminoaspartate: step 1/1. Its function is as follows. Catalyzes the condensation of iminoaspartate with dihydroxyacetone phosphate to form quinolinate. The sequence is that of Quinolinate synthase from Bacillus cereus (strain ATCC 14579 / DSM 31 / CCUG 7414 / JCM 2152 / NBRC 15305 / NCIMB 9373 / NCTC 2599 / NRRL B-3711).